Consider the following 285-residue polypeptide: Polyamine aminopropyltransferase (285 aa).

The 237-residue stretch at D5–K241 folds into the PABS domain. An S-methyl-5'-thioadenosine-binding site is contributed by Q35. H66 and D90 together coordinate spermidine. Residues D110 and D141 to G142 contribute to the S-methyl-5'-thioadenosine site. D160 (proton acceptor) is an active-site residue. Spermidine is bound at residue D160–D163. Residue P167 participates in S-methyl-5'-thioadenosine binding.

The protein belongs to the spermidine/spermine synthase family. Homodimer or homotetramer.

It is found in the cytoplasm. The catalysed reaction is S-adenosyl 3-(methylsulfanyl)propylamine + putrescine = S-methyl-5'-thioadenosine + spermidine + H(+). Its pathway is amine and polyamine biosynthesis; spermidine biosynthesis; spermidine from putrescine: step 1/1. Functionally, catalyzes the irreversible transfer of a propylamine group from the amino donor S-adenosylmethioninamine (decarboxy-AdoMet) to putrescine (1,4-diaminobutane) to yield spermidine. This chain is Polyamine aminopropyltransferase, found in Xanthomonas euvesicatoria pv. vesicatoria (strain 85-10) (Xanthomonas campestris pv. vesicatoria).